The primary structure comprises 184 residues: mRNA transport regulator MTR2 (184 aa).

The disordered stretch occupies residues 111–135 (KMGQDATVPIQPNNTGNRNRPNDMN). A compositionally biased stretch (polar residues) spans 120-129 (IQPNNTGNRN). Residue threonine 125 is modified to Phosphothreonine.

As to quaternary structure, interacts with MEX67.

The protein localises to the nucleus. Affects mRNA transport from the nucleus to the cytoplasm. This is mRNA transport regulator MTR2 (MTR2) from Saccharomyces cerevisiae (strain ATCC 204508 / S288c) (Baker's yeast).